The primary structure comprises 1927 residues: Immunoglobulin A1 protease (1927 aa).

An N-terminal signal peptide occupies residues 1–42 (MEKYFGEKQERFSFRKLSVGLVSATISSLFFMSVLASSSVDA). Residues 43–99 (QETAGVHYKYVADSELSSEEKKQLVYDIPTYVENDDETYYLVYKLNSQNQLAELPNT) constitute a propeptide that is removed on maturation. The LPXTG sorting signal motif lies at 96-100 (LPNTG). Position 99 is a pentaglycyl murein peptidoglycan amidated threonine (Thr-99). 2 consecutive transmembrane segments (helical) span residues 106–125 (QALVAGASLAALGILIFAVS) and 132–154 (KTVLHLVLVAGIGNGVLVSVHAL). At 155-1927 (ENHLLLNYNT…FRRSIFENKK (1773 aa)) the chain is on the extracellular side. The segment covering 235–246 (QEQTPVSSTKPT) has biased composition (polar residues). 3 disordered regions span residues 235-305 (QEQT…NPQD), 371-394 (SREIVSTSTTAPSPRIVEKGTKKT), and 426-640 (EAVV…PEKT). Over residues 276–296 (LAEHKNLETKKEEKISPKEKT) the composition is skewed to basic and acidic residues. One can recognise a G5 domain in the interval 314-393 (KPELLYREET…PRIVEKGTKK (80 aa)). 3 tandem repeats follow at residues 419 to 435 (AIQPELPEAVVSDKGEP), 436 to 452 (EVQPTLPEAVVTDKGEP), and 453 to 469 (AVQPELPEAVVSDKGEP). The 3 X 17 AA approximate tandem repeats stretch occupies residues 419–469 (AIQPELPEAVVSDKGEPEVQPTLPEAVVTDKGEPAVQPELPEAVVSDKGEP). The span at 485–511 (VKPETPVEKTKEQGPEKTEEVPVKPTE) shows a compositional bias: basic and acidic residues. Composition is skewed to polar residues over residues 516–529 (NPNEGTTEGTSIQG), 538–559 (EDTQTNSGKIANENTGEVSNKP), and 568–606 (ESNQPEKNGTATKPENSGNTTSENGQTEPEPSNGNSTED). Over residues 609 to 619 (TKSNTSNSNGN) the composition is skewed to low complexity. Over residues 620–640 (EEIKQENELDPDKKVEDPEKT) the composition is skewed to basic and acidic residues. A Zn(2+)-binding site is contributed by His-1565. Glu-1566 is a catalytic residue. The Zn(2+) site is built by His-1569 and Glu-1589.

It belongs to the peptidase M26 family. Requires Zn(2+) as cofactor. Post-translationally, the Gram-positive cell-wall anchor motif LPXTG is located in the N-terminal part, in contrast to such motifs in other known streptococcal and staphylococcal proteins. The protease could be cleaved by the sortase and anchored in the membrane via the two potential N-terminal transmembrane domains, whereas the propeptide located prior to the LPXTG motif would remain attached to the cell wall peptidoglycan by an amide bond.

The protein localises to the secreted. It is found in the cell wall. It localises to the membrane. The enzyme catalyses Cleavage of Pro-|-Thr bond in the hinge region of the heavy chain of human IgA.. Functionally, zinc metalloproteinase which cleaves human immunoglobulin A1 (IgA1) in the hinge region, rendering it less efficient in coating the surface of colonizing or invading pneumococci. May be responsible for pneumococcal infection and is potentially involved in distinct stages of pneumococcal disease. This chain is Immunoglobulin A1 protease (iga), found in Streptococcus pneumoniae.